A 356-amino-acid polypeptide reads, in one-letter code: Syntaxin-7A (356 aa).

The Cytoplasmic portion of the chain corresponds to 1-333 (MYNNNNNFGG…NQKSSRNKMC (333 aa)). Low complexity-rich tracts occupy residues 32 to 74 (NNNN…FDNN) and 207 to 224 (NNNS…NNQQ). 2 disordered regions span residues 32–88 (NNNN…NSDY) and 187–247 (EKTT…RRQQ). The span at 233 to 244 (EDEHQSLMESSR) shows a compositional bias: basic and acidic residues. The 63-residue stretch at 259–321 (NSIIQERDEG…KEGVNHLREA (63 aa)) folds into the t-SNARE coiled-coil homology domain. The chain crosses the membrane as a helical; Anchor for type IV membrane protein span at residues 334–354 (WIVLILLIVCAVLGVILFFTL). Topologically, residues 355–356 (RK) are vesicular.

The protein belongs to the syntaxin family. Component of the SNARE complex composed of syn7A, syn8A, vamp7A and vti1A. Interacts with nsfA, snpA and snpC.

It localises to the endosome membrane. Involved in the targeting and/or fusion of transport vesicles to their target membrane during transport of proteins from the early endosome to the lysosome. Required for fusion of late endosomes with lysosomes and homotypic lysosomal fusion. May be involved in protein trafficking from the plasma membrane to the early endosome (EE) as well as in homotypic fusion of endocytic organelles. This is Syntaxin-7A from Dictyostelium discoideum (Social amoeba).